Here is a 215-residue protein sequence, read N- to C-terminus: Vesicle transport protein SFT2C (215 aa).

The Cytoplasmic segment spans residues 1 to 82 (MADLHRQLQE…RGQRLAAGGG (82 aa)). Residues 83-103 (CLLLAALCFGLAALYAPVLLL) traverse the membrane as a helical segment. Over 104–107 (RARK) the chain is Lumenal. Residues 108–128 (FALLWSLGSALALAGSALLRG) traverse the membrane as a helical segment. Residues 129 to 142 (GAACGRLLRCEEAP) lie on the Cytoplasmic side of the membrane. The helical transmembrane segment at 143 to 163 (SRPALLYMAALGATLFAALGL) threads the bilayer. Residues 164–166 (RST) lie on the Lumenal side of the membrane. The chain crosses the membrane as a helical span at residues 167–187 (LLTVLGAGAQVAALLAALVGL). Topologically, residues 188–215 (LPWGGGTALRLALGRLGRGAGLAKVLPV) are cytoplasmic.

It belongs to the SFT2 family.

The protein resides in the membrane. In terms of biological role, may be involved in fusion of retrograde transport vesicles derived from an endocytic compartment with the Golgi complex. The sequence is that of Vesicle transport protein SFT2C from Homo sapiens (Human).